Consider the following 161-residue polypeptide: Nucleotide-binding protein Sfri_0732 (161 aa).

This sequence belongs to the YajQ family.

Nucleotide-binding protein. The sequence is that of Nucleotide-binding protein Sfri_0732 from Shewanella frigidimarina (strain NCIMB 400).